The chain runs to 444 residues: MAGGMKVAVSPAVGPGPWGSGVGGGGTVRLLLILSGCLVYGTAEIDVNVVMLQESQVCEKRASQQFCYTNVLIPKWHDIWTRIQIRVNSSKLVRVTQVENEQKLKELEQFSIWNFFSSFLKEKLNDTYVNVGLYSTKTCLKVEIIEKDTKYSVIVIRRFDPKLFLVFLLGLMLFFCGDLLSRSQIFYYSTGMSVGIVASLLIIIFILSKFMPKKSPIYVILVGGWSFSLYLIQLVFKNLQEIWRCYWQYLLSYILTVGFMSFAVCYKYGPLENERSIDLLTWTLQLMGLCFMYSGIQIPHIALAIIIIALCTKNLEYPIQWLYITYRKVCKAAEKPVPPRLLTEEEYRIQGEVETRKALEELREFCNSPDCSAWKTVSRIQSPKRFADFVEGSSHLTPNEVSVHEQEYGLGSIIAQDEIYEEASSEEEDSYSRCPAITQNNFLT.

An N-terminal signal peptide occupies residues 1–43 (MAGGMKVAVSPAVGPGPWGSGVGGGGTVRLLLILSGCLVYGTA). An N-linked (GlcNAc...) asparagine glycan is attached at Asn-125. A run of 5 helical transmembrane segments spans residues 161–181 (PKLFLVFLLGLMLFFCGDLLS), 186–206 (FYYSTGMSVGIVASLLIIIFI), 216–236 (PIYVILVGGWSFSLYLIQLVF), 245–265 (CYWQYLLSYILTVGFMSFAVC), and 289–309 (LCFMYSGIQIPHIALAIIIIA). The segment at 186 to 297 (FYYSTGMSVG…GLCFMYSGIQ (112 aa)) is a; required for its colocalization with lamins at the nuclear envelope. Residues 336–405 (PVPPRLLTEE…LTPNEVSVHE (70 aa)) are b; required for interaction with RAN-GTP. The interval 336–444 (PVPPRLLTEE…PAITQNNFLT (109 aa)) is required for nuclear localization. 3 positions are modified to phosphoserine: Ser-368, Ser-424, and Ser-425.

This sequence belongs to the NEMP family. In terms of assembly, homooligomer. Interacts with RAN-GTP. Interacts with EMD. Post-translationally, phosphorylation may regulate its interaction with RAN-GTP.

It localises to the nucleus inner membrane. The protein resides in the nucleus envelope. Functionally, together with EMD, contributes to nuclear envelope stiffness in germ cells. Required for female fertility. Essential for normal erythropoiesis. Required for efficient nuclear envelope opening and enucleation during the late stages of erythroblast maturation. The polypeptide is Nuclear envelope integral membrane protein 1 (NEMP1) (Pongo abelii (Sumatran orangutan)).